Reading from the N-terminus, the 117-residue chain is uncharacterized protein (117 aa).

The N-terminal stretch at 1–18 (MKFFWVSSLLGLLGLSTA) is a signal peptide. Asn-86 carries an N-linked (GlcNAc...) asparagine glycan.

This is an uncharacterized protein from Schizosaccharomyces pombe (strain 972 / ATCC 24843) (Fission yeast).